The sequence spans 130 residues: MFDISFTELIVIGIVALVVIGPERLPAVARTAGYFLGRARRYIEQVKRDLNEEMELDSLRKLRDSMHETVDSFQNSVHSEINKIQETADTRPAAVPEKESHAVESGGKTEPENTEAAASSTPKEPRQSGS.

The chain crosses the membrane as a helical span at residues 1 to 21 (MFDISFTELIVIGIVALVVIG). Residues 70–130 (VDSFQNSVHS…TPKEPRQSGS (61 aa)) form a disordered region. Basic and acidic residues-rich tracts occupy residues 80–89 (EINKIQETAD) and 96–111 (PEKESHAVESGGKTEP).

The protein belongs to the TatB family. The Tat system comprises two distinct complexes: a TatABC complex, containing multiple copies of TatA, TatB and TatC subunits, and a separate TatA complex, containing only TatA subunits. Substrates initially bind to the TatABC complex, which probably triggers association of the separate TatA complex to form the active translocon.

Its subcellular location is the cell inner membrane. Functionally, part of the twin-arginine translocation (Tat) system that transports large folded proteins containing a characteristic twin-arginine motif in their signal peptide across membranes. Together with TatC, TatB is part of a receptor directly interacting with Tat signal peptides. TatB may form an oligomeric binding site that transiently accommodates folded Tat precursor proteins before their translocation. The sequence is that of Sec-independent protein translocase protein TatB from Nitrosomonas eutropha (strain DSM 101675 / C91 / Nm57).